The chain runs to 612 residues: Dihydroxy-acid dehydratase (612 aa).

Residue Asp81 coordinates Mg(2+). Cys122 lines the [2Fe-2S] cluster pocket. Mg(2+) is bound by residues Asp123 and Lys124. Lys124 is modified (N6-carboxylysine). A [2Fe-2S] cluster-binding site is contributed by Cys195. Glu491 contacts Mg(2+). Residue Ser517 is the Proton acceptor of the active site.

It belongs to the IlvD/Edd family. As to quaternary structure, homodimer. The cofactor is [2Fe-2S] cluster. Mg(2+) serves as cofactor.

The catalysed reaction is (2R)-2,3-dihydroxy-3-methylbutanoate = 3-methyl-2-oxobutanoate + H2O. The enzyme catalyses (2R,3R)-2,3-dihydroxy-3-methylpentanoate = (S)-3-methyl-2-oxopentanoate + H2O. It functions in the pathway amino-acid biosynthesis; L-isoleucine biosynthesis; L-isoleucine from 2-oxobutanoate: step 3/4. Its pathway is amino-acid biosynthesis; L-valine biosynthesis; L-valine from pyruvate: step 3/4. Functionally, functions in the biosynthesis of branched-chain amino acids. Catalyzes the dehydration of (2R,3R)-2,3-dihydroxy-3-methylpentanoate (2,3-dihydroxy-3-methylvalerate) into 2-oxo-3-methylpentanoate (2-oxo-3-methylvalerate) and of (2R)-2,3-dihydroxy-3-methylbutanoate (2,3-dihydroxyisovalerate) into 2-oxo-3-methylbutanoate (2-oxoisovalerate), the penultimate precursor to L-isoleucine and L-valine, respectively. The chain is Dihydroxy-acid dehydratase from Rhizobium etli (strain ATCC 51251 / DSM 11541 / JCM 21823 / NBRC 15573 / CFN 42).